The following is a 385-amino-acid chain: Rubredoxin-NAD(+) reductase (385 aa).

Residues 8–11 (AGTA), 32–33 (SR), Ile-79, Glu-156, Asp-275, and Ile-293 contribute to the FAD site.

It belongs to the FAD-dependent oxidoreductase family. As to quaternary structure, homodimer. It depends on FAD as a cofactor.

Its subcellular location is the cytoplasm. It catalyses the reaction 2 reduced [rubredoxin] + NAD(+) + H(+) = 2 oxidized [rubredoxin] + NADH. It participates in hydrocarbon metabolism; alkane degradation. Its function is as follows. Involved in the hydrocarbon hydroxylating system, which transfers electrons from NADH to rubredoxin reductase and then through rubredoxin to alkane 1 monooxygenase. This is Rubredoxin-NAD(+) reductase (alkT) from Pseudomonas putida (Arthrobacter siderocapsulatus).